The sequence spans 209 residues: MAKDFRDITLALAGICQASRLVQQIAYQGNADEKDVEVMVNSIFNINPTSTLDVYSNQISHLKLGFQTIKAIHQAVRREKLTFELMTYQQGLINLERIINKNNDYSSHLSQKISQLERQKNYFEPLSDGLFNALAGVYSDAVSPVGPKIQVNGSIELLKNPIIQAKVRGLLLTGLRSAVLWRQVGGRRFDFLLHQKTILRQTDDFLAQC.

It belongs to the HflD family.

Its subcellular location is the cytoplasm. It is found in the cell inner membrane. The protein is High frequency lysogenization protein HflD homolog of Proteus mirabilis (strain HI4320).